Consider the following 240-residue polypeptide: Ubiquinone biosynthesis O-methyltransferase (240 aa).

S-adenosyl-L-methionine-binding residues include arginine 44, glycine 64, aspartate 85, and methionine 129.

Belongs to the methyltransferase superfamily. UbiG/COQ3 family.

It catalyses the reaction a 3-demethylubiquinol + S-adenosyl-L-methionine = a ubiquinol + S-adenosyl-L-homocysteine + H(+). The enzyme catalyses a 3-(all-trans-polyprenyl)benzene-1,2-diol + S-adenosyl-L-methionine = a 2-methoxy-6-(all-trans-polyprenyl)phenol + S-adenosyl-L-homocysteine + H(+). It functions in the pathway cofactor biosynthesis; ubiquinone biosynthesis. Functionally, O-methyltransferase that catalyzes the 2 O-methylation steps in the ubiquinone biosynthetic pathway. The chain is Ubiquinone biosynthesis O-methyltransferase from Escherichia coli O157:H7.